A 214-amino-acid chain; its full sequence is Ribonuclease HII (214 aa).

Residues 18-208 (SRVVGVDEVG…SLLPSEAHLC (191 aa)) enclose the RNase H type-2 domain. The a divalent metal cation site is built by Asp-24, Glu-25, and Asp-116.

This sequence belongs to the RNase HII family. The cofactor is Mn(2+). Mg(2+) is required as a cofactor.

It is found in the cytoplasm. It catalyses the reaction Endonucleolytic cleavage to 5'-phosphomonoester.. Its function is as follows. Endonuclease that specifically degrades the RNA of RNA-DNA hybrids. The chain is Ribonuclease HII from Thermosynechococcus vestitus (strain NIES-2133 / IAM M-273 / BP-1).